The chain runs to 232 residues: Ion-translocating oxidoreductase complex subunit E (232 aa).

Helical transmembrane passes span 18–38 (GLVQLLGLCPLLAVTATITNA), 39–59 (LGLGLATMLVLIGSNILVSLV), 69–89 (IPVFVMIIAALVTTVQLLINA), 93–113 (GLYLSLGIFLPLIVTNCIIIG), 127–147 (AAFDGLMMGLGFTLVLTVLGA), and 182–202 (PFLLAMLPPGAFIVMGLLIAL).

The protein belongs to the NqrDE/RnfAE family. As to quaternary structure, the complex is composed of six subunits: RnfA, RnfB, RnfC, RnfD, RnfE and RnfG.

It is found in the cell inner membrane. In terms of biological role, part of a membrane-bound complex that couples electron transfer with translocation of ions across the membrane. The sequence is that of Ion-translocating oxidoreductase complex subunit E from Shewanella baltica (strain OS185).